The sequence spans 233 residues: Cytochrome c oxidase subunit 3 (233 aa).

Helical transmembrane passes span 62–82, 98–118, 135–155, and 172–192; these read VVLFLVAESAIFLGLFTAYLI, LELLLPGVNSIILISSSFVMH, WFGITAAMGIIFLAGQMYEYF, and VLTGFHGLHVTFGLLLILSVL.

This sequence belongs to the cytochrome c oxidase subunit 3 family.

Its subcellular location is the cell membrane. The catalysed reaction is 4 Fe(II)-[cytochrome c] + O2 + 8 H(+)(in) = 4 Fe(III)-[cytochrome c] + 2 H2O + 4 H(+)(out). In Synechocystis sp. (strain ATCC 27184 / PCC 6803 / Kazusa), this protein is Cytochrome c oxidase subunit 3 (ctaE).